We begin with the raw amino-acid sequence, 788 residues long: LPS-assembly protein LptD (788 aa).

Residues 1–24 (MKKRFPTLLATLIWTALYSQHTLA) form the signal peptide.

The protein belongs to the LptD family. As to quaternary structure, component of the lipopolysaccharide transport and assembly complex. Interacts with LptE and LptA.

It is found in the cell outer membrane. Its function is as follows. Together with LptE, is involved in the assembly of lipopolysaccharide (LPS) at the surface of the outer membrane. This Yersinia enterocolitica serotype O:8 / biotype 1B (strain NCTC 13174 / 8081) protein is LPS-assembly protein LptD.